The following is a 941-amino-acid chain: HMG box transcription factor BBX (941 aa).

The segment covering 1–18 has biased composition (basic and acidic residues); the sequence is MKGSNRNKDHSAEGEGVG. Disordered regions lie at residues 1–21, 39–80, 157–200, and 221–242; these read MKGS…GKRP, FSEE…EQRA, VKSP…FGMA, and TPEV…LRQK. Acidic residues-rich tracts occupy residues 39 to 52 and 63 to 75; these read FSEE…EEDI and LEQD…DDES. The HMG box DNA-binding region spans 80–148; that stretch reads ARRPMNAFLL…AFMKANPGYK (69 aa). The span at 177–191 shows a compositional bias: basic and acidic residues; that stretch reads SSRDLPSPKKAKTEE. At Ser243 the chain carries Phosphoserine. The stretch at 326 to 370 forms a coiled coil; the sequence is GRIKELEKGKEEKEIKMEKTDETRLQKEAEFEKSAKENLRDSKEL. Residue Lys385 forms a Glycyl lysine isopeptide (Lys-Gly) (interchain with G-Cter in SUMO2) linkage. Residues 438-482 are disordered; that stretch reads IEDPAALNKPEKLKKKKKKSKMDRHGNDKSTPKKTCKKRQSSESD. The span at 449 to 459 shows a compositional bias: basic residues; sequence KLKKKKKKSKM. Phosphoserine occurs at positions 478 and 485. Basic and acidic residues-rich tracts occupy residues 499 to 508 and 536 to 552; these read GIEKLGDTPR and KKMS…ESRP. 2 disordered regions span residues 499 to 600 and 635 to 677; these read GIEK…SDCH and NVDR…KKTK. A Glycyl lysine isopeptide (Lys-Gly) (interchain with G-Cter in SUMO2) cross-link involves residue Lys573. Residues 661–670 show a composition bias toward low complexity; the sequence is TFSQSGTSGS. Residue Lys696 forms a Glycyl lysine isopeptide (Lys-Gly) (interchain with G-Cter in SUMO2) linkage. Ser704 bears the Phosphoserine mark. 3 disordered regions span residues 714–771, 803–888, and 912–941; these read PVPR…DKWS, IPSI…SSTP, and HRGQ…CADQ. Over residues 723–742 the composition is skewed to polar residues; the sequence is GNVSSEPTKTSKGPFQSQKK. The span at 743–757 shows a compositional bias: basic residues; sequence NLFHKIVSKYKHKKE. Over residues 758–771 the composition is skewed to basic and acidic residues; that stretch reads KPNVPEKGSGDKWS. Positions 805–817 are enriched in polar residues; it reads SIFNTPEPTTTQE. Ser822 bears the Phosphoserine mark. A compositionally biased stretch (basic residues) spans 823 to 834; the sequence is QKRKARKTKITH. Position 844 is a phosphoserine (Ser844). Basic and acidic residues predominate over residues 866–882; the sequence is TETDCNDKCSHNTEVGE.

It localises to the nucleus. Its function is as follows. Transcription factor that is necessary for cell cycle progression from G1 to S phase. The polypeptide is HMG box transcription factor BBX (BBX) (Homo sapiens (Human)).